A 610-amino-acid chain; its full sequence is 6(G)-fructosyltransferase (610 aa).

The Cytoplasmic segment spans residues 1–20 (MATSLQAPILGSRPPRRTLR). A helical; Signal-anchor for type II membrane protein membrane pass occupies residues 21–38 (FLSFALFSALVLVVASFS). The Vacuolar segment spans residues 39–610 (SRKSESGSGL…NQYYPFTSSN (572 aa)). Substrate contacts are provided by residues 79–82 (YMND), Q98, W106, 141–142 (WT), and 207–208 (RD). D82 is a catalytic residue. N215, N229, and N248 each carry an N-linked (GlcNAc...) asparagine glycan. E266 contacts substrate. N-linked (GlcNAc...) asparagine glycosylation occurs at N459. Cysteines 460 and 508 form a disulfide. N-linked (GlcNAc...) asparagine glycans are attached at residues N580 and N597.

The protein belongs to the glycosyl hydrolase 32 family. Post-translationally, might be processed in two N-terminal and C-terminal proteolytic fragments.

The protein resides in the vacuole membrane. The enzyme catalyses [1-beta-D-fructofuranosyl-(2-&gt;1)-]m+1 alpha-D-glucopyranoside + [1-beta-D-fructofuranosyl-(2-&gt;1)-]n+1 alpha-D-glucopyranoside = [1-beta-D-fructofuranosyl-(2-&gt;1)-]m alpha-D-glucopyranoside + [1-beta-D-fructofuranosyl-(2-&gt;1)-]n+1 beta-D-fructofuranosyl-(2-&gt;6)-alpha-D-glucopyranoside (m &gt; 0, n &gt;= 0).. Functionally, involved in the synthesis of fructan of the inulin neoseries. Has no 1-FFT activity. The sequence is that of 6(G)-fructosyltransferase (FT1) from Asparagus officinalis (Garden asparagus).